The following is a 483-amino-acid chain: Salicylaldehyde dehydrogenase (483 aa).

228–233 serves as a coordination point for NAD(+); sequence GSTRVG. Catalysis depends on residues Glu-250 and Cys-284.

This sequence belongs to the aldehyde dehydrogenase family.

The catalysed reaction is salicylaldehyde + NAD(+) + H2O = salicylate + NADH + 2 H(+). Its pathway is aromatic compound metabolism; naphthalene degradation. The polypeptide is Salicylaldehyde dehydrogenase (nahF) (Pseudomonas putida (Arthrobacter siderocapsulatus)).